We begin with the raw amino-acid sequence, 344 residues long: Methionine import ATP-binding protein MetN (344 aa).

The region spanning 2–241 (IEIRNLSQRF…PHHEVTRALI (240 aa)) is the ABC transporter domain. Position 38–45 (38–45 (GRSGAGKS)) interacts with ATP.

The protein belongs to the ABC transporter superfamily. Methionine importer (TC 3.A.1.24) family. As to quaternary structure, the complex is composed of two ATP-binding proteins (MetN), two transmembrane proteins (MetI) and a solute-binding protein (MetQ).

Its subcellular location is the cell inner membrane. It carries out the reaction L-methionine(out) + ATP + H2O = L-methionine(in) + ADP + phosphate + H(+). The enzyme catalyses D-methionine(out) + ATP + H2O = D-methionine(in) + ADP + phosphate + H(+). In terms of biological role, part of the ABC transporter complex MetNIQ involved in methionine import. Responsible for energy coupling to the transport system. This chain is Methionine import ATP-binding protein MetN, found in Burkholderia thailandensis (strain ATCC 700388 / DSM 13276 / CCUG 48851 / CIP 106301 / E264).